Consider the following 180-residue polypeptide: MVPRLQEKYEKEVIPALIEKFGYKNIMEVPKLEKIVINMGVGEAKENQKMLESAVSDLSIIAGQKPIVTKAKKSVANFKIRENMPIGCKVTLRKVKMYEFADKLMNVALPRVRDFRGVSSKSFDGRGNYSLGVKEQLMFPEIEYDKVDKVRGMDIIFVTTAKTDEEARELLRFLGMPFAH.

This sequence belongs to the universal ribosomal protein uL5 family. Part of the 50S ribosomal subunit; part of the 5S rRNA/L5/L18/L25 subcomplex. Contacts the 5S rRNA and the P site tRNA. Forms a bridge to the 30S subunit in the 70S ribosome.

Functionally, this is one of the proteins that bind and probably mediate the attachment of the 5S RNA into the large ribosomal subunit, where it forms part of the central protuberance. In the 70S ribosome it contacts protein S13 of the 30S subunit (bridge B1b), connecting the 2 subunits; this bridge is implicated in subunit movement. Contacts the P site tRNA; the 5S rRNA and some of its associated proteins might help stabilize positioning of ribosome-bound tRNAs. This Clostridium tetani (strain Massachusetts / E88) protein is Large ribosomal subunit protein uL5.